Reading from the N-terminus, the 316-residue chain is L-lactate dehydrogenase (316 aa).

Residues valine 15, aspartate 37, lysine 42, tyrosine 68, and 82–83 (GL) contribute to the NAD(+) site. Residues glutamine 85, arginine 91, and 123–126 (NPVD) contribute to the substrate site. NAD(+)-binding positions include 121–123 (ASN) and threonine 146. 151 to 154 (DTSR) is a substrate binding site. The beta-D-fructose 1,6-bisphosphate site is built by arginine 156 and histidine 171. Catalysis depends on histidine 178, which acts as the Proton acceptor. Residue tyrosine 222 is modified to Phosphotyrosine. A substrate-binding site is contributed by threonine 231.

It belongs to the LDH/MDH superfamily. LDH family. As to quaternary structure, homotetramer.

It is found in the cytoplasm. The enzyme catalyses (S)-lactate + NAD(+) = pyruvate + NADH + H(+). Its pathway is fermentation; pyruvate fermentation to lactate; (S)-lactate from pyruvate: step 1/1. Its activity is regulated as follows. Allosterically activated by fructose 1,6-bisphosphate (FBP). Catalyzes the conversion of lactate to pyruvate. This is L-lactate dehydrogenase from Borrelia turicatae (strain 91E135).